The sequence spans 215 residues: Probable GTP-binding protein EngB (215 aa).

The region spanning 26-200 (EGIEVAFAGR…RAKLDEWFAP (175 aa)) is the EngB-type G domain. GTP contacts are provided by residues 34–41 (GRSNAGKS), 61–65 (GRTQL), 79–82 (DLPG), 146–149 (TKAD), and 179–181 (FSS). Mg(2+) contacts are provided by serine 41 and threonine 63.

Belongs to the TRAFAC class TrmE-Era-EngA-EngB-Septin-like GTPase superfamily. EngB GTPase family. Mg(2+) serves as cofactor.

Functionally, necessary for normal cell division and for the maintenance of normal septation. The chain is Probable GTP-binding protein EngB from Aliivibrio fischeri (strain MJ11) (Vibrio fischeri).